Here is a 357-residue protein sequence, read N- to C-terminus: C-X-C chemokine receptor type 2 (357 aa).

Topologically, residues 1 to 45 are extracellular; sequence FNMESDSFEDFWKGEDLSNYSYSSTLPPFLLDAAPCEPESLEINK. Asn-19 carries an N-linked (GlcNAc...) asparagine glycan. Residues 46-72 form a helical membrane-spanning segment; sequence YFVVIIYALVFLLSLLGNSLVMLVILY. The Cytoplasmic portion of the chain corresponds to 73 to 81; sequence SRVGRSVTD. Residues 82–102 form a helical membrane-spanning segment; that stretch reads VYLLNLALADLLFALTLPIWA. Topologically, residues 103-117 are extracellular; that stretch reads ASKVNGWIFGTFLCK. A disulfide bridge links Cys-116 with Cys-193. The helical transmembrane segment at 118 to 139 threads the bilayer; the sequence is VVSLLKEVNFYSGILLLACISV. Residues 140 to 160 are Cytoplasmic-facing; the sequence is DRYLAIVHATRTLTQKRYLVK. Residues 161-180 form a helical membrane-spanning segment; it reads FICLSIWGLSLLLALPVLLF. Over 181-205 the chain is Extracellular; the sequence is RRTVYSSNVSPACYEDMGNNTANWR. The chain crosses the membrane as a helical span at residues 206–228; the sequence is MLLRILPQSFGFIVPLLIMLFCY. At 229–248 the chain is on the cytoplasmic side; that stretch reads GFTLRTLFKAHMGQKHRAMR. A helical membrane pass occupies residues 249-270; it reads VIFAVVLIFLLCWLPYNLVLLA. The Extracellular portion of the chain corresponds to 271 to 291; that stretch reads DTLMRTQVIQETCERRNHIDR. The chain crosses the membrane as a helical span at residues 292 to 312; sequence ALDATEILGILHSCLNPLIYA. Topologically, residues 313–357 are cytoplasmic; sequence FIGQKFRHGLLKILAIHGLISKDSLPKDSRPSFVGSSSGHTSTTL.

Belongs to the G-protein coupled receptor 1 family. Interacts with IL8. Interacts with GNAI2. Phosphorylated upon ligand binding; which is required for desensitization.

It is found in the cell membrane. Its function is as follows. Receptor for interleukin-8 which is a powerful neutrophil chemotactic factor. Binding of IL-8 to the receptor causes activation of neutrophils. This response is mediated via a G-protein that activates a phosphatidylinositol-calcium second messenger system. Binds to IL-8 with high affinity. Also binds with high affinity to CXCL3, GRO/MGSA and NAP-2. This Pan troglodytes (Chimpanzee) protein is C-X-C chemokine receptor type 2 (CXCR2).